We begin with the raw amino-acid sequence, 272 residues long: Putative pyruvate, phosphate dikinase regulatory protein (272 aa).

151–158 (GISRTSKT) lines the ADP pocket.

Belongs to the pyruvate, phosphate/water dikinase regulatory protein family. PDRP subfamily.

It catalyses the reaction N(tele)-phospho-L-histidyl/L-threonyl-[pyruvate, phosphate dikinase] + ADP = N(tele)-phospho-L-histidyl/O-phospho-L-threonyl-[pyruvate, phosphate dikinase] + AMP + H(+). It carries out the reaction N(tele)-phospho-L-histidyl/O-phospho-L-threonyl-[pyruvate, phosphate dikinase] + phosphate + H(+) = N(tele)-phospho-L-histidyl/L-threonyl-[pyruvate, phosphate dikinase] + diphosphate. Bifunctional serine/threonine kinase and phosphorylase involved in the regulation of the pyruvate, phosphate dikinase (PPDK) by catalyzing its phosphorylation/dephosphorylation. The protein is Putative pyruvate, phosphate dikinase regulatory protein of Staphylococcus aureus (strain Mu3 / ATCC 700698).